The chain runs to 260 residues: Shikimate dehydrogenase (NADP(+)) (260 aa).

Shikimate is bound by residues 14–16 and threonine 60; that span reads SAS. Lysine 64 serves as the catalytic Proton acceptor. Residues asparagine 85 and aspartate 100 each coordinate shikimate. NADP(+) is bound by residues 121–125, 145–150, and phenylalanine 201; these read GAGGA and NRTYER. Tyrosine 203 provides a ligand contact to shikimate. An NADP(+)-binding site is contributed by glycine 225.

The protein belongs to the shikimate dehydrogenase family. As to quaternary structure, homodimer.

The enzyme catalyses shikimate + NADP(+) = 3-dehydroshikimate + NADPH + H(+). The protein operates within metabolic intermediate biosynthesis; chorismate biosynthesis; chorismate from D-erythrose 4-phosphate and phosphoenolpyruvate: step 4/7. In terms of biological role, involved in the biosynthesis of the chorismate, which leads to the biosynthesis of aromatic amino acids. Catalyzes the reversible NADPH linked reduction of 3-dehydroshikimate (DHSA) to yield shikimate (SA). In Pyrobaculum islandicum (strain DSM 4184 / JCM 9189 / GEO3), this protein is Shikimate dehydrogenase (NADP(+)).